The primary structure comprises 426 residues: MTRHAEKRVVITGIGVRAPGGAGTAAFWDLLTAGRTATRTISLFDAAPYRSRIAGEIDFDPIGEGLSPRQASTYDRATQLAVVCAREALKDSGLDPAAVNPERIGVSIGTAVGCTTGLDREYARVSEGGSRWLVDHTLAVEQLFDYFVPTSICREVAWEAGAEGPVTVVSTGCTSGLDAVGYGTELIRDGRADVVVCGATDAPISPITVACFDAIKATSANNDDPAHASRPFDRNRDGFVLGEGSAVFVLEELSAARRRGAHAYAEVRGFATRSNAFHMTGLKPDGREMAEAITAALDQARRTGDDLHYINAHGSGTRQNDRHETAAFKRSLGQRAYDVPVSSIKSMIGHSLGAIGSLELAACALAIEHGVIPPTANYEEPDPECDLDYVPNVAREQRVDTVLSVGSGFGGFQSAAVLARPKETRS.

The 415-residue stretch at 6–420 (EKRVVITGIG…GFQSAAVLAR (415 aa)) folds into the Ketosynthase family 3 (KS3) domain. Catalysis depends on for beta-ketoacyl synthase activity residues C173, H313, and H350.

It belongs to the thiolase-like superfamily. Beta-ketoacyl-ACP synthases family. As to quaternary structure, the tetracenomycin polyketide synthase (TCM PKS) is composed of a ketosynthase complex (TcmKL), an acyl carrier protein (TcmM), a cyclase (TcmN) and a probable second cyclase (TcmJ). TcmK and TcmL form a heterodimeric complex.

It carries out the reaction 10 malonyl-CoA + 8 H(+) = tetracenomycin F2 + 10 CO2 + 10 CoA + 2 H2O. Its pathway is antibiotic biosynthesis; tetracenomycin C biosynthesis. In terms of biological role, involved in the biosynthesis of tetracenomycin C (TCM C). Part of a type II polyketide synthase (PKS) that catalyzes the synthesis of tetracenomycin F2 (TCM F2), a precursor of TCM C, from malonyl-CoA. TcmK and TcmL form a heterodimeric alpha-beta complex that catalyzes the condensation reactions between the growing acyl-enzyme chain and the malonyl-CoA extender units. The sequence is that of Tetracenomycin polyketide synthase ketoacyl synthase alpha subunit from Streptomyces glaucescens.